The chain runs to 144 residues: Deoxyuridine 5'-triphosphate nucleotidohydrolase (144 aa).

Substrate contacts are provided by residues Arg-63–Gly-65, Asn-76, and Thr-80–Asp-82.

The protein belongs to the dUTPase family. Requires Mg(2+) as cofactor.

The catalysed reaction is dUTP + H2O = dUMP + diphosphate + H(+). The protein operates within pyrimidine metabolism; dUMP biosynthesis; dUMP from dCTP (dUTP route): step 2/2. Its function is as follows. This enzyme is involved in nucleotide metabolism: it produces dUMP, the immediate precursor of thymidine nucleotides and it decreases the intracellular concentration of dUTP so that uracil cannot be incorporated into DNA. The protein is Deoxyuridine 5'-triphosphate nucleotidohydrolase of Bacteroides fragilis (strain YCH46).